We begin with the raw amino-acid sequence, 211 residues long: Histidine biosynthesis bifunctional protein HisIE (211 aa).

Residues 1–117 (MSTQTNTKSD…CWLDGNAHPF (117 aa)) form a phosphoribosyl-AMP cyclohydrolase region. The tract at residues 118–211 (LNNLAELIAS…LARHQKAQRK (94 aa)) is phosphoribosyl-ATP pyrophosphohydrolase.

The protein in the N-terminal section; belongs to the PRA-CH family. This sequence in the C-terminal section; belongs to the PRA-PH family.

The protein localises to the cytoplasm. The enzyme catalyses 1-(5-phospho-beta-D-ribosyl)-ATP + H2O = 1-(5-phospho-beta-D-ribosyl)-5'-AMP + diphosphate + H(+). It carries out the reaction 1-(5-phospho-beta-D-ribosyl)-5'-AMP + H2O = 1-(5-phospho-beta-D-ribosyl)-5-[(5-phospho-beta-D-ribosylamino)methylideneamino]imidazole-4-carboxamide. It functions in the pathway amino-acid biosynthesis; L-histidine biosynthesis; L-histidine from 5-phospho-alpha-D-ribose 1-diphosphate: step 2/9. The protein operates within amino-acid biosynthesis; L-histidine biosynthesis; L-histidine from 5-phospho-alpha-D-ribose 1-diphosphate: step 3/9. The chain is Histidine biosynthesis bifunctional protein HisIE from Shewanella oneidensis (strain ATCC 700550 / JCM 31522 / CIP 106686 / LMG 19005 / NCIMB 14063 / MR-1).